The chain runs to 271 residues: 3-methyl-2-oxobutanoate hydroxymethyltransferase (271 aa).

Mg(2+) is bound by residues aspartate 53 and aspartate 92. 3-methyl-2-oxobutanoate is bound by residues 53 to 54 (DS), aspartate 92, and lysine 120. Mg(2+) is bound at residue glutamate 122. The active-site Proton acceptor is the glutamate 189.

This sequence belongs to the PanB family. Homodecamer; pentamer of dimers. The cofactor is Mg(2+).

It is found in the cytoplasm. It carries out the reaction 3-methyl-2-oxobutanoate + (6R)-5,10-methylene-5,6,7,8-tetrahydrofolate + H2O = 2-dehydropantoate + (6S)-5,6,7,8-tetrahydrofolate. The protein operates within cofactor biosynthesis; (R)-pantothenate biosynthesis; (R)-pantoate from 3-methyl-2-oxobutanoate: step 1/2. Catalyzes the reversible reaction in which hydroxymethyl group from 5,10-methylenetetrahydrofolate is transferred onto alpha-ketoisovalerate to form ketopantoate. This is 3-methyl-2-oxobutanoate hydroxymethyltransferase from Burkholderia vietnamiensis (strain G4 / LMG 22486) (Burkholderia cepacia (strain R1808)).